The following is a 387-amino-acid chain: Probable 1-alkyl-2-acetylglycerophosphocholine esterase (387 aa).

Positions 1-17 (MLVQGTIICALVANAIA) are cleaved as a signal peptide. N-linked (GlcNAc...) asparagine glycosylation is found at Asn-51 and Asn-141. The active-site Nucleophile is Ser-227. The Charge relay system role is filled by Asp-250. Asn-283 is a glycosylation site (N-linked (GlcNAc...) asparagine). His-313 acts as the Charge relay system in catalysis.

The protein belongs to the AB hydrolase superfamily. Lipase family.

The protein localises to the secreted. It catalyses the reaction a 1-O-alkyl-2-acetyl-sn-glycero-3-phosphocholine + H2O = a 1-O-alkyl-sn-glycero-3-phosphocholine + acetate + H(+). The chain is Probable 1-alkyl-2-acetylglycerophosphocholine esterase from Arthroderma benhamiae (strain ATCC MYA-4681 / CBS 112371) (Trichophyton mentagrophytes).